The chain runs to 499 residues: Proline--tRNA ligase (499 aa).

The protein belongs to the class-II aminoacyl-tRNA synthetase family. ProS type 3 subfamily. As to quaternary structure, homodimer.

The protein localises to the cytoplasm. The catalysed reaction is tRNA(Pro) + L-proline + ATP = L-prolyl-tRNA(Pro) + AMP + diphosphate. Its function is as follows. Catalyzes the attachment of proline to tRNA(Pro) in a two-step reaction: proline is first activated by ATP to form Pro-AMP and then transferred to the acceptor end of tRNA(Pro). This Bdellovibrio bacteriovorus (strain ATCC 15356 / DSM 50701 / NCIMB 9529 / HD100) protein is Proline--tRNA ligase.